Reading from the N-terminus, the 147-residue chain is Ponticulin-like protein C3 (147 aa).

Residues 1-20 form the signal peptide; that stretch reads MKFTKSLLLLIVAVFASSNA. N118 carries GPI-like-anchor amidated asparagine lipidation. A glycan (N-linked (GlcNAc...) asparagine) is linked at N118. Positions 119–147 are cleaved as a propeptide — removed in mature form; that stretch reads SSESDSSDSTRIGASFALFALALLSMLAL.

This sequence belongs to the ponticulin family. The GPI-like-anchor contains a phosphoceramide group, rather than a phosphatidyl group.

Its subcellular location is the cell membrane. The chain is Ponticulin-like protein C3 (ponC3) from Dictyostelium discoideum (Social amoeba).